The chain runs to 600 residues: Methionine--tRNA ligase (600 aa).

Positions 12–22 (PYANGPRHIGH) match the 'HIGH' region motif. Residues C144, C147, C157, and C160 each coordinate Zn(2+). The 'KMSKS' region motif lies at 351-355 (KFSSS). S354 is a binding site for ATP.

The protein belongs to the class-I aminoacyl-tRNA synthetase family. MetG type 1 subfamily. Monomer. Zn(2+) is required as a cofactor.

Its subcellular location is the cytoplasm. The catalysed reaction is tRNA(Met) + L-methionine + ATP = L-methionyl-tRNA(Met) + AMP + diphosphate. Is required not only for elongation of protein synthesis but also for the initiation of all mRNA translation through initiator tRNA(fMet) aminoacylation. The protein is Methionine--tRNA ligase of Chloroflexus aurantiacus (strain ATCC 29364 / DSM 637 / Y-400-fl).